The following is a 204-amino-acid chain: Urease accessory protein UreE (204 aa).

A compositionally biased stretch (basic and acidic residues) spans histidine 172–histidine 190. Residues histidine 172–histidine 204 form a disordered region.

Belongs to the UreE family.

The protein resides in the cytoplasm. Functionally, involved in urease metallocenter assembly. Binds nickel. Probably functions as a nickel donor during metallocenter assembly. The polypeptide is Urease accessory protein UreE (Burkholderia orbicola (strain AU 1054)).